The primary structure comprises 333 residues: Holliday junction branch migration complex subunit RuvB (333 aa).

Residues 1–182 (MEERLVSGDV…FGVISRLEYY (182 aa)) are large ATPase domain (RuvB-L). ATP-binding positions include L21, R22, G63, K66, T67, T68, 129 to 131 (EDY), R172, Y182, and R219. Residue T67 coordinates Mg(2+). Positions 183-253 (TTEHLTQIVM…LAKEALELLQ (71 aa)) are small ATPAse domain (RuvB-S). The interval 256–333 (RLGLDHIDHK…EHFGMEVPKQ (78 aa)) is head domain (RuvB-H). R311 and R316 together coordinate DNA.

This sequence belongs to the RuvB family. As to quaternary structure, homohexamer. Forms an RuvA(8)-RuvB(12)-Holliday junction (HJ) complex. HJ DNA is sandwiched between 2 RuvA tetramers; dsDNA enters through RuvA and exits via RuvB. An RuvB hexamer assembles on each DNA strand where it exits the tetramer. Each RuvB hexamer is contacted by two RuvA subunits (via domain III) on 2 adjacent RuvB subunits; this complex drives branch migration. In the full resolvosome a probable DNA-RuvA(4)-RuvB(12)-RuvC(2) complex forms which resolves the HJ.

It localises to the cytoplasm. The enzyme catalyses ATP + H2O = ADP + phosphate + H(+). The RuvA-RuvB-RuvC complex processes Holliday junction (HJ) DNA during genetic recombination and DNA repair, while the RuvA-RuvB complex plays an important role in the rescue of blocked DNA replication forks via replication fork reversal (RFR). RuvA specifically binds to HJ cruciform DNA, conferring on it an open structure. The RuvB hexamer acts as an ATP-dependent pump, pulling dsDNA into and through the RuvAB complex. RuvB forms 2 homohexamers on either side of HJ DNA bound by 1 or 2 RuvA tetramers; 4 subunits per hexamer contact DNA at a time. Coordinated motions by a converter formed by DNA-disengaged RuvB subunits stimulates ATP hydrolysis and nucleotide exchange. Immobilization of the converter enables RuvB to convert the ATP-contained energy into a lever motion, pulling 2 nucleotides of DNA out of the RuvA tetramer per ATP hydrolyzed, thus driving DNA branch migration. The RuvB motors rotate together with the DNA substrate, which together with the progressing nucleotide cycle form the mechanistic basis for DNA recombination by continuous HJ branch migration. Branch migration allows RuvC to scan DNA until it finds its consensus sequence, where it cleaves and resolves cruciform DNA. The chain is Holliday junction branch migration complex subunit RuvB from Geobacillus sp. (strain WCH70).